Consider the following 253-residue polypeptide: Vacuolar v-SNARE NYV1 (253 aa).

The Cytoplasmic segment spans residues 1–231 (MKRFNVSYVE…EIMWWQKVKN (231 aa)). The segment at 147–166 (LNSSGNGQSSNGNGQNTISD) is disordered. Positions 148-162 (NSSGNGQSSNGNGQN) are enriched in low complexity. Residues 167-227 (IGDATEDQIK…VNIKEIMWWQ (61 aa)) form the v-SNARE coiled-coil homology domain. A helical; Anchor for type IV membrane protein transmembrane segment spans residues 232–252 (ITLLTFTIILFVSAAFMFFYL). Residue W253 is a topological domain, vacuolar.

This sequence belongs to the synaptobrevin family. Present in a pentameric cis-SNARE complex composed of the v-SNAREs NYV1, VTI1 and YKT6, and the t-SNAREs VAM3 and VAM7 on vacuolar membranes. Interacts in trans with the cognate t-SNARE VAM3 during the docking step of homotypic vacuolar fusion. Interacts with the vacuolar transporter chaperone (VTC) complex and the vacuolar Ca(2+)-ATPase PMC1.

It is found in the vacuole membrane. Its function is as follows. Vacuolar v-SNARE required for docking. Only involved in homotypic vacuole fusion. Required for Ca(2+) efflux from the vacuolar lumen, a required signal for subsequent membrane fusion events, by inhibiting vacuolar Ca(2+)-ATPase PMC1 and promoting Ca(2+) release when forming trans-SNARE assemblies during the docking step. This Saccharomyces cerevisiae (strain ATCC 204508 / S288c) (Baker's yeast) protein is Vacuolar v-SNARE NYV1 (NYV1).